The sequence spans 1347 residues: Neurofascin (1347 aa).

A signal peptide spans 1–24; it reads MARQPPPPWVHAAFLLCLLSLGGA. The Extracellular segment spans residues 25–1217; that stretch reads IEIPMDPSIQ…NQADIATQGW (1193 aa). 6 consecutive Ig-like C2-type domains span residues 41-137, 143-230, 244-332, 337-424, 429-517, and 521-603; these read PTIT…LQVS, PKEN…NPFT, PSFM…ISVR, PYWL…AFVS, PPRM…VRLE, and PTRI…QDLA. Cystine bridges form between Cys-63/Cys-118, Cys-162/Cys-213, Cys-268/Cys-316, and Cys-358/Cys-408. A glycan (N-linked (GlcNAc...) asparagine) is linked at Asn-305. Residues Asn-409 and Asn-446 are each glycosylated (N-linked (GlcNAc...) asparagine). 2 disulfide bridges follow: Cys-452–Cys-501 and Cys-543–Cys-592. Tyr-481 is modified (phosphotyrosine). Asn-483 is a glycosylation site (N-linked (GlcNAc...) asparagine). A Phosphoserine modification is found at Ser-485. 4 Fibronectin type-III domains span residues 630-725, 730-823, 828-930, and 934-1030; these read RPRD…TSGA, NPGD…SGED, APTE…TPEG, and APRR…PNEA. Residues 713 to 740 are disordered; it reads PSLPSERYRTSGAPPESNPGDVKGEGTR. Residues Asn-752 and Asn-778 are each glycosylated (N-linked (GlcNAc...) asparagine). A disordered region spans residues 915–934; sequence GDGPRSETKEFTTPEGVPSA. Over residues 916 to 926 the composition is skewed to basic and acidic residues; the sequence is DGPRSETKEFT. Asn-973 and Asn-988 each carry an N-linked (GlcNAc...) asparagine glycan. Disordered regions lie at residues 1011–1040 and 1090–1111; these read TQVGSGEAVTEESPAPPNEATPTAAPPTLP and TTAAATTTTESPPTTTSGTKIH. The segment covering 1024 to 1040 has biased composition (pro residues); it reads PAPPNEATPTAAPPTLP. Positions 1090-1105 are enriched in low complexity; that stretch reads TTAAATTTTESPPTTT. Residues 1114–1206 enclose the Fibronectin type-III 5 domain; the sequence is APDEQSIWNV…ITFMTSTAYT (93 aa). A helical transmembrane segment spans residues 1218–1238; sequence FIGLMCAIALLVLILLIVCFI. Residues 1239 to 1347 lie on the Cytoplasmic side of the membrane; sequence KRSRGGKYPV…SPVNAIYSLA (109 aa). The tract at residues 1248-1347 is disordered; the sequence is VREKKDVPLG…SPVNAIYSLA (100 aa). Positions 1261-1272 are enriched in acidic residues; sequence PKEEDGSFDYSD. A phosphoserine mark is found at Ser-1267, Ser-1281, Ser-1294, Ser-1297, Ser-1333, Ser-1334, and Ser-1338. The span at 1278 to 1291 shows a compositional bias: polar residues; sequence LQGSQTSLDGTIKQ.

It belongs to the immunoglobulin superfamily. L1/neurofascin/NgCAM family. In terms of assembly, horseshoe-shaped homodimer. Probable constituent of a NFASC/NRCAM/ankyrin-G complex. Associates with the sodium channel beta-1 (SCN1B) and beta-3 (SCN3B) subunits. Interacts with GLDN/gliomedin. Interacts with MYOC.

It is found in the cell membrane. The protein localises to the cell junction. Its subcellular location is the paranodal septate junction. Its function is as follows. Cell adhesion, ankyrin-binding protein which may be involved in neurite extension, axonal guidance, synaptogenesis, myelination and neuron-glial cell interactions. The sequence is that of Neurofascin (NFASC) from Homo sapiens (Human).